A 145-amino-acid polypeptide reads, in one-letter code: Lipoprotein signal peptidase (145 aa).

The next 2 membrane-spanning stretches (helical) occupy residues 57–77 and 79–99; these read LFFIVITVVVGIVLIYSMIKL and ENSLYNYTLAMILGGAIGNLI. Active-site residues include Asp109 and Asp124. A helical membrane pass occupies residues 120–140; that stretch reads FNVADSFIVVGAIILGYLMIF.

Belongs to the peptidase A8 family.

Its subcellular location is the cell membrane. The catalysed reaction is Release of signal peptides from bacterial membrane prolipoproteins. Hydrolyzes -Xaa-Yaa-Zaa-|-(S,diacylglyceryl)Cys-, in which Xaa is hydrophobic (preferably Leu), and Yaa (Ala or Ser) and Zaa (Gly or Ala) have small, neutral side chains.. It functions in the pathway protein modification; lipoprotein biosynthesis (signal peptide cleavage). This protein specifically catalyzes the removal of signal peptides from prolipoproteins. This is Lipoprotein signal peptidase from Caldanaerobacter subterraneus subsp. tengcongensis (strain DSM 15242 / JCM 11007 / NBRC 100824 / MB4) (Thermoanaerobacter tengcongensis).